A 291-amino-acid polypeptide reads, in one-letter code: Ribosome biogenesis protein BRX1 (291 aa).

In terms of domain architecture, Brix spans 31-232 (QRTLLISSRG…VILILEGSFG (202 aa)). At Ser-285 the chain carries Phosphoserine.

This sequence belongs to the BRX1 family. Part of a complex that includes BRX1, RPF1, RPF2 and SSF1 or SSF2.

The protein resides in the nucleus. The protein localises to the nucleolus. In terms of biological role, required for biogenesis of the 60S ribosomal subunit. This Saccharomyces cerevisiae (strain ATCC 204508 / S288c) (Baker's yeast) protein is Ribosome biogenesis protein BRX1 (BRX1).